The chain runs to 347 residues: Gas vesicle ATPase GvpN1 (347 aa).

A compositionally biased stretch (basic residues) spans 1-11 (MTNESRKRKVR). Residues 1-64 (MTNESRKRKV…EGFVPEEQSF (64 aa)) are disordered. Positions 18–55 (SRGDKKQGRSQSRDDKEIERLERQNDARGQESSTHVDE) are enriched in basic and acidic residues. Position 91 to 98 (91 to 98 (GPTGCGKT)) interacts with ATP.

The protein belongs to the CbbQ/NirQ/NorQ/GpvN family. In terms of assembly, forms homodimers, forms a GvpN1-GvpO1 heterodimer, interacts with GvpC1 (via the latter's C-terminus) and GvpL, might interact with GvpA1.

It is found in the gas vesicle. The protein resides in the cytoplasm. It catalyses the reaction ATP + H2O = ADP + phosphate + H(+). Its function is as follows. An ATPase that functions in gas vesicle formation. A minor component of the gas vesicle, also found in soluble extracts. Probably enhances gas vesicle formation. Gas vesicles are hollow, gas filled proteinaceous nanostructures found in several microbial planktonic microorganisms. They allow positioning of halobacteria at the optimal depth for growth in the poorly aerated, shallow brine pools of their habitat. Expression of a 9.5 kb p-vac DNA fragment containing 2 divergently transcribed regions (gvpD-gvpE-gvpF-gvpG-gvpH-gvpI-gvpJ-gvpK-gvpL-gvpM and gvpA-gvpC-gvpN-gvpO) allows H.volcanii to produce gas vesicles. A similar region restores gas vesicle production in H.halobium without the p-vac locus, but which still have the c-vac locus. The polypeptide is Gas vesicle ATPase GvpN1 (gvpN11) (Halobacterium salinarum (strain ATCC 700922 / JCM 11081 / NRC-1) (Halobacterium halobium)).